The chain runs to 314 residues: Pseudouridine-5'-phosphate glycosidase (314 aa).

The Proton donor role is filled by Glu30. The substrate site is built by Lys91 and Val111. Residue Asp143 participates in Mn(2+) binding. Ser145 to Asp147 is a binding site for substrate. The Nucleophile role is filled by Lys164.

This sequence belongs to the pseudouridine-5'-phosphate glycosidase family. As to quaternary structure, homotrimer. Requires Mn(2+) as cofactor.

The enzyme catalyses D-ribose 5-phosphate + uracil = psi-UMP + H2O. Its function is as follows. Catalyzes the reversible cleavage of pseudouridine 5'-phosphate (PsiMP) to ribose 5-phosphate and uracil. Functions biologically in the cleavage direction, as part of a pseudouridine degradation pathway. The sequence is that of Pseudouridine-5'-phosphate glycosidase from Cupriavidus pinatubonensis (strain JMP 134 / LMG 1197) (Cupriavidus necator (strain JMP 134)).